The sequence spans 170 residues: Endoribonuclease YbeY (170 aa).

Positions 118, 122, and 128 each coordinate Zn(2+).

This sequence belongs to the endoribonuclease YbeY family. Zn(2+) serves as cofactor.

Its subcellular location is the cytoplasm. In terms of biological role, single strand-specific metallo-endoribonuclease involved in late-stage 70S ribosome quality control and in maturation of the 3' terminus of the 16S rRNA. The protein is Endoribonuclease YbeY of Mycobacteroides abscessus (strain ATCC 19977 / DSM 44196 / CCUG 20993 / CIP 104536 / JCM 13569 / NCTC 13031 / TMC 1543 / L948) (Mycobacterium abscessus).